Here is a 127-residue protein sequence, read N- to C-terminus: Large ribosomal subunit protein bL12 (127 aa).

Belongs to the bacterial ribosomal protein bL12 family. As to quaternary structure, homodimer. Part of the ribosomal stalk of the 50S ribosomal subunit. Forms a multimeric L10(L12)X complex, where L10 forms an elongated spine to which 2 to 4 L12 dimers bind in a sequential fashion. Binds GTP-bound translation factors.

Forms part of the ribosomal stalk which helps the ribosome interact with GTP-bound translation factors. Is thus essential for accurate translation. The protein is Large ribosomal subunit protein bL12 of Rhizobium etli (strain CIAT 652).